The following is a 525-amino-acid chain: AarF domain-containing protein kinase 1 (525 aa).

Positions 148-477 (SFDDTPLGAA…HKKRDAGSFF (330 aa)) constitute a Protein kinase domain. ATP contacts are provided by residues 154–162 (LGAASLAQV) and Lys-176. Asp-308 acts as the Proton acceptor in catalysis.

It belongs to the protein kinase superfamily. ADCK protein kinase family.

It localises to the mitochondrion. In terms of biological role, appears to be essential for maintaining mitochondrial cristae formation and mitochondrial function by acting via YME1L1 in a kinase-independent manner to regulate essential mitochondrial structural proteins OPA1 and IMMT. The action of this enzyme is not yet clear. It is not known if it has protein kinase activity and what type of substrate it would phosphorylate (Ser, Thr or Tyr). The polypeptide is AarF domain-containing protein kinase 1 (Adck1) (Mus musculus (Mouse)).